We begin with the raw amino-acid sequence, 500 residues long: NAD(P)H-quinone oxidoreductase chain 4, chloroplastic (500 aa).

Transmembrane regions (helical) follow at residues 4–24 (FPWLTIIVVFPISAGSLMLFL), 35–55 (YTICICILELLITTYAFCYNF), 87–107 (IGTILLTGFITTLATLAAFPV), 113–130 (LFHFLMLAMYSGQIGSFS), 134–154 (LLLFFIMWELELIPVYLLLSM), 167–187 (FILYTAGSSIFLLIGVLGISL), 211–231 (ILFYIGFVIALTVKSPIIPLH), 242–262 (HYSTCMLLAGILLKMGAYGLV), 272–292 (AHSLFSPWLMAVGTIQIIYAA), 305–325 (IAYSSVSHMGFIIIGIGSITD), 330–350 (GAILQIISHGFIGAALFFLAG), 386–406 (LALPGMSGFVAELIVFFGIIT), 416–436 (ILIIFVMAIGIILTPIYLLSM), and 462–482 (LFLSISILLPIIGIGIYPDFV).

The protein belongs to the complex I subunit 4 family.

It is found in the plastid. The protein resides in the chloroplast thylakoid membrane. It carries out the reaction a plastoquinone + NADH + (n+1) H(+)(in) = a plastoquinol + NAD(+) + n H(+)(out). The catalysed reaction is a plastoquinone + NADPH + (n+1) H(+)(in) = a plastoquinol + NADP(+) + n H(+)(out). The chain is NAD(P)H-quinone oxidoreductase chain 4, chloroplastic from Draba nemorosa (Woodland whitlowgrass).